A 109-amino-acid chain; its full sequence is Large ribosomal subunit protein uL22 (109 aa).

Belongs to the universal ribosomal protein uL22 family. As to quaternary structure, part of the 50S ribosomal subunit.

This protein binds specifically to 23S rRNA; its binding is stimulated by other ribosomal proteins, e.g. L4, L17, and L20. It is important during the early stages of 50S assembly. It makes multiple contacts with different domains of the 23S rRNA in the assembled 50S subunit and ribosome. In terms of biological role, the globular domain of the protein is located near the polypeptide exit tunnel on the outside of the subunit, while an extended beta-hairpin is found that lines the wall of the exit tunnel in the center of the 70S ribosome. In Cupriavidus metallidurans (strain ATCC 43123 / DSM 2839 / NBRC 102507 / CH34) (Ralstonia metallidurans), this protein is Large ribosomal subunit protein uL22.